The following is a 118-amino-acid chain: Phosphoribosyl-AMP cyclohydrolase (118 aa).

D85 contacts Mg(2+). C86 provides a ligand contact to Zn(2+). 2 residues coordinate Mg(2+): D87 and D89. Residues C102 and C109 each coordinate Zn(2+).

Belongs to the PRA-CH family. As to quaternary structure, homodimer. Mg(2+) is required as a cofactor. It depends on Zn(2+) as a cofactor.

It localises to the cytoplasm. The enzyme catalyses 1-(5-phospho-beta-D-ribosyl)-5'-AMP + H2O = 1-(5-phospho-beta-D-ribosyl)-5-[(5-phospho-beta-D-ribosylamino)methylideneamino]imidazole-4-carboxamide. It functions in the pathway amino-acid biosynthesis; L-histidine biosynthesis; L-histidine from 5-phospho-alpha-D-ribose 1-diphosphate: step 3/9. Catalyzes the hydrolysis of the adenine ring of phosphoribosyl-AMP. The chain is Phosphoribosyl-AMP cyclohydrolase from Sulfurisphaera tokodaii (strain DSM 16993 / JCM 10545 / NBRC 100140 / 7) (Sulfolobus tokodaii).